A 251-amino-acid chain; its full sequence is Imidazole glycerol phosphate synthase subunit HisF (251 aa).

Active-site residues include Asp-13 and Asp-132.

Belongs to the HisA/HisF family. As to quaternary structure, heterodimer of HisH and HisF.

It localises to the cytoplasm. It carries out the reaction 5-[(5-phospho-1-deoxy-D-ribulos-1-ylimino)methylamino]-1-(5-phospho-beta-D-ribosyl)imidazole-4-carboxamide + L-glutamine = D-erythro-1-(imidazol-4-yl)glycerol 3-phosphate + 5-amino-1-(5-phospho-beta-D-ribosyl)imidazole-4-carboxamide + L-glutamate + H(+). It functions in the pathway amino-acid biosynthesis; L-histidine biosynthesis; L-histidine from 5-phospho-alpha-D-ribose 1-diphosphate: step 5/9. Functionally, IGPS catalyzes the conversion of PRFAR and glutamine to IGP, AICAR and glutamate. The HisF subunit catalyzes the cyclization activity that produces IGP and AICAR from PRFAR using the ammonia provided by the HisH subunit. The polypeptide is Imidazole glycerol phosphate synthase subunit HisF (Campylobacter concisus (strain 13826)).